The chain runs to 275 residues: Ribosomal RNA small subunit methyltransferase A (275 aa).

Positions 28, 30, 55, 77, 103, and 123 each coordinate S-adenosyl-L-methionine.

It belongs to the class I-like SAM-binding methyltransferase superfamily. rRNA adenine N(6)-methyltransferase family. RsmA subfamily.

The protein resides in the cytoplasm. It carries out the reaction adenosine(1518)/adenosine(1519) in 16S rRNA + 4 S-adenosyl-L-methionine = N(6)-dimethyladenosine(1518)/N(6)-dimethyladenosine(1519) in 16S rRNA + 4 S-adenosyl-L-homocysteine + 4 H(+). Functionally, specifically dimethylates two adjacent adenosines (A1518 and A1519) in the loop of a conserved hairpin near the 3'-end of 16S rRNA in the 30S particle. May play a critical role in biogenesis of 30S subunits. This is Ribosomal RNA small subunit methyltransferase A from Rhizobium johnstonii (strain DSM 114642 / LMG 32736 / 3841) (Rhizobium leguminosarum bv. viciae).